A 346-amino-acid polypeptide reads, in one-letter code: MTQQRPPLEIRLCGPRGFCAGVDRAIQIVVLALKKYGAPVYVRHEIVHNRYVVEGLQARGAIFVEELDEIPAAHRNQPVVFSAHGVPKSVPADAEAKNLFYLDATCPLVSKVHKQAMRHQRLGRHVILIGHSGHPEVIGTMGQLPDGAVTLIETVEDAHTCHFDDEDNLGFVTQTTLSVDDTAGIIKELQARFPNLAAPAAESICYATTNRQDAVRAAAPGCDLFLIVGAPNSSNSKRLVEVAEKAGARMSMLVQRAEDIEWEQIGDISVVGLSAGASAPEIIVDEIIDAFKAHFDVKIELAETTVETENFLVNREIRDVELTVKDMAFVNGEHRVVGISKLMQGK.

Cys19 provides a ligand contact to [4Fe-4S] cluster. 2 residues coordinate (2E)-4-hydroxy-3-methylbut-2-enyl diphosphate: His48 and His84. The dimethylallyl diphosphate site is built by His48 and His84. 2 residues coordinate isopentenyl diphosphate: His48 and His84. Cys106 contributes to the [4Fe-4S] cluster binding site. Residue His134 coordinates (2E)-4-hydroxy-3-methylbut-2-enyl diphosphate. Residue His134 participates in dimethylallyl diphosphate binding. His134 contributes to the isopentenyl diphosphate binding site. The active-site Proton donor is the Glu136. Thr175 is a (2E)-4-hydroxy-3-methylbut-2-enyl diphosphate binding site. Cys205 contacts [4Fe-4S] cluster. Residues Ser233, Ser234, Asn235, and Ser278 each contribute to the (2E)-4-hydroxy-3-methylbut-2-enyl diphosphate site. The dimethylallyl diphosphate site is built by Ser233, Ser234, Asn235, and Ser278. The isopentenyl diphosphate site is built by Ser233, Ser234, Asn235, and Ser278.

This sequence belongs to the IspH family. It depends on [4Fe-4S] cluster as a cofactor.

The catalysed reaction is isopentenyl diphosphate + 2 oxidized [2Fe-2S]-[ferredoxin] + H2O = (2E)-4-hydroxy-3-methylbut-2-enyl diphosphate + 2 reduced [2Fe-2S]-[ferredoxin] + 2 H(+). It carries out the reaction dimethylallyl diphosphate + 2 oxidized [2Fe-2S]-[ferredoxin] + H2O = (2E)-4-hydroxy-3-methylbut-2-enyl diphosphate + 2 reduced [2Fe-2S]-[ferredoxin] + 2 H(+). Its pathway is isoprenoid biosynthesis; dimethylallyl diphosphate biosynthesis; dimethylallyl diphosphate from (2E)-4-hydroxy-3-methylbutenyl diphosphate: step 1/1. It participates in isoprenoid biosynthesis; isopentenyl diphosphate biosynthesis via DXP pathway; isopentenyl diphosphate from 1-deoxy-D-xylulose 5-phosphate: step 6/6. Its function is as follows. Catalyzes the conversion of 1-hydroxy-2-methyl-2-(E)-butenyl 4-diphosphate (HMBPP) into a mixture of isopentenyl diphosphate (IPP) and dimethylallyl diphosphate (DMAPP). Acts in the terminal step of the DOXP/MEP pathway for isoprenoid precursor biosynthesis. This is 4-hydroxy-3-methylbut-2-enyl diphosphate reductase from Brucella suis biovar 1 (strain 1330).